The chain runs to 1042 residues: Sarcoplasmic/endoplasmic reticulum calcium ATPase 2 (1042 aa).

Residues 1–48 (MENAHTKTVEEVLGHFGVNESTGLSLEQVKKLKERWGSNELPAEEGKT) are Cytoplasmic-facing. At Ser38 the chain carries Phosphoserine. The chain crosses the membrane as a helical span at residues 49–69 (LLELVIEQFEDLLVRILLLAA). Over 70 to 89 (CISFVLAWFEEGEETITAFV) the chain is Lumenal. The chain crosses the membrane as a helical span at residues 90–110 (EPFVILLILVANAIVGVWQER). Residues 111–253 (NAENAIEALK…QERTPLQQKL (143 aa)) are Cytoplasmic-facing. A helical transmembrane segment spans residues 254–273 (DEFGEQLSKVISLICIAVWI). The Lumenal portion of the chain corresponds to 274-295 (INIGHFNDPVHGGSWIRGAIYY). A 3'-nitrotyrosine mark is found at Tyr294 and Tyr295. The chain crosses the membrane as a helical span at residues 296-313 (FKIAVALAVAAIPEGLPA). Positions 304, 305, 307, and 309 each coordinate Ca(2+). The Cytoplasmic portion of the chain corresponds to 314 to 756 (VITTCLALGT…EEGRAIYNNM (443 aa)). Catalysis depends on Asp351, which acts as the 4-aspartylphosphate intermediate. Mg(2+)-binding residues include Asp351 and Thr353. Thr353 serves as a coordination point for ATP. Residue Thr441 is modified to Phosphothreonine. The ATP site is built by Glu442, Arg489, and Lys514. Ser531 carries the phosphoserine modification. Arg559 provides a ligand contact to ATP. The interval 575 to 594 (MHLKDSANFIKYETNLTFVG) is interaction with HAX1. Residue Ser580 is modified to Phosphoserine. 3 residues coordinate ATP: Thr624, Gly625, and Asp626. The residue at position 663 (Ser663) is a Phosphoserine. ATP contacts are provided by Arg677 and Lys683. Asp702 lines the Mg(2+) pocket. Asn705 lines the ATP pocket. The chain crosses the membrane as a helical span at residues 757-776 (KQFIRYLISSNVGEVVCIFL). Positions 767 and 770 each coordinate Ca(2+). Residues 777-786 (TAALGFPEAL) lie on the Lumenal side of the membrane. The helical transmembrane segment at 787 to 807 (IPVQLLWVNLVTDGLPATALG) threads the bilayer. Residues 787 to 807 (IPVQLLWVNLVTDGLPATALG) are interaction with PLN. Residues 788 to 1042 (PVQLLWVNLV…DTNFSDLLWS (255 aa)) form an interaction with TMEM64 and PDIA3 region. Ca(2+)-binding residues include Asn795, Thr798, and Asp799. Topologically, residues 808-827 (FNPPDLDIMNKPPRNPKEPL) are cytoplasmic. A helical membrane pass occupies residues 828 to 850 (ISGWLFFRYLAIGCYVGAATVGA). The Lumenal segment spans residues 851–896 (AAWWFIAADGGPRVSFYQLSHFLQCKEDNPDFEGVDCAIFESPYPM). The cysteines at positions 875 and 887 are disulfide-linked. A helical membrane pass occupies residues 897–916 (TMALSVLVTIEMCNALNSLS). Glu907 is a Ca(2+) binding site. The Cytoplasmic portion of the chain corresponds to 917–929 (ENQSLLRMPPWEN). Residues 930-948 (IWLVGSICLSMSLHFLILY) form a helical membrane-spanning segment. Residues 931 to 942 (WLVGSICLSMSL) are interaction with PLN. The Lumenal segment spans residues 949 to 963 (VEPLPLIFQITPLNV). A helical transmembrane segment spans residues 964 to 984 (TQWLMVLKISLPVILMDETLK). The Cytoplasmic portion of the chain corresponds to 985–1042 (FVARNYLEPGKECVQPAPQSCSLWACTEGVSWPFVLLIVPLVMWVYSTDTNFSDLLWS).

The protein belongs to the cation transport ATPase (P-type) (TC 3.A.3) family. Type IIA subfamily. In terms of assembly, interacts with sarcolipin (SLN); the interaction inhibits ATP2A2 Ca(2+) affinity. Interacts with phospholamban (PLN); the interaction inhibits ATP2A2 Ca(2+) affinity. Interacts with myoregulin (MRLN). Interacts with ARLN and ERLN; the interactions inhibit ATP2A2 Ca(2+) affinity. Interacts with SRTIT1/DWORF; the interaction results in activation of ATP2A2. Interacts with the monomeric forms of SLN, PLN, ARLN, ERLN and STRI1/DWORF. Interacts with HAX1. Interacts with S100A8 and S100A9. Interacts with SLC35G1 and STIM1. Interacts with TMEM203. Interacts with TMEM64 and PDIA3. Interacts with TMX1. Interacts with TMX2. Interacts with VMP1; VMP1 competes with PLN and SLN to prevent them from forming an inhibitory complex with ATP2A2. Interacts with ULK1. Interacts with TUNAR. Interacts with FLVCR2; this interaction occurs in the absence of heme and promotes ATP2A2 proteasomal degradation; this complex is dissociated upon heme binding. Interacts with FNIP1. Interacts with TRAM2 (via C-terminus). The cofactor is Mg(2+). Nitrated under oxidative stress. Nitration on the two tyrosine residues inhibits catalytic activity. In terms of processing, serotonylated on Gln residues by TGM2 in response to hypoxia, leading to its inactivation. Isoform 2 is highly expressed in heart and slow twitch skeletal muscle. Isoform 1 is widely expressed.

Its subcellular location is the endoplasmic reticulum membrane. It localises to the sarcoplasmic reticulum membrane. The enzyme catalyses Ca(2+)(in) + ATP + H2O = Ca(2+)(out) + ADP + phosphate + H(+). Has different conformational states with differential Ca2+ affinity. The E1 conformational state (active form) shows high Ca(2+) affinity, while the E2 state exhibits low Ca(2+) affinity. Binding of ATP allosterically increases its affinity for subsequent binding of Ca2+. Reversibly inhibited by phospholamban (PLN) at low calcium concentrations. PLN inhibits ATP2A2 Ca(2+) affinity by disrupting its allosteric activation by ATP. Inhibited by sarcolipin (SLN) and myoregulin (MRLN). The inhibition is blocked by VMP1. Enhanced by STRIT1/DWORF; STRIT1 increases activity by displacing sarcolipin (SLN), phospholamban (PLN) and myoregulin (MRLN). Stabilizes SERCA2 in its E2 state. In terms of biological role, this magnesium-dependent enzyme catalyzes the hydrolysis of ATP coupled with the translocation of calcium from the cytosol to the sarcoplasmic reticulum lumen. Involved in autophagy in response to starvation. Upon interaction with VMP1 and activation, controls ER-isolation membrane contacts for autophagosome formation. Also modulates ER contacts with lipid droplets, mitochondria and endosomes. In coordination with FLVCR2 mediates heme-stimulated switching from mitochondrial ATP synthesis to thermogenesis. Functionally, involved in the regulation of the contraction/relaxation cycle. Acts as a regulator of TNFSF11-mediated Ca(2+) signaling pathways via its interaction with TMEM64 which is critical for the TNFSF11-induced CREB1 activation and mitochondrial ROS generation necessary for proper osteoclast generation. Association between TMEM64 and SERCA2 in the ER leads to cytosolic Ca(2+) spiking for activation of NFATC1 and production of mitochondrial ROS, thereby triggering Ca(2+) signaling cascades that promote osteoclast differentiation and activation. The polypeptide is Sarcoplasmic/endoplasmic reticulum calcium ATPase 2 (ATP2A2) (Oryctolagus cuniculus (Rabbit)).